The chain runs to 751 residues: Palmitoyltransferase ZDHHC8B (751 aa).

Residues 1–13 are Cytoplasmic-facing; sequence MPNSVGKRFKPTK. A helical transmembrane segment spans residues 14–34; the sequence is YIPVSTAATLLVGSTTLFFVF. The Extracellular segment spans residues 35-41; that stretch reads TCPWLTK. The helical transmembrane segment at 42 to 62 threads the bilayer; the sequence is AVSPVVPLYNGIVFLFVLANF. At 63 to 148 the chain is on the cytoplasmic side; it reads SMATFMDPGV…NCIGRRNYRY (86 aa). In terms of domain architecture, DHHC spans 104-154; that stretch reads KWCATCHFYRPPRCSHCSVCDNCVEEFDHHCPWVNNCIGRRNYRYFFLFLL. The active-site S-palmitoyl cysteine intermediate is Cys-134. A helical membrane pass occupies residues 149 to 169; the sequence is FFLFLLSLSVHMVGVFSFGLL. Residues 170–185 lie on the Extracellular side of the membrane; sequence FVLHHLETLSALHTTV. Residues 186-206 form a helical membrane-spanning segment; it reads TLVVMCVTGLFFIPVMGLTGF. At 207-751 the chain is on the cytoplasmic side; that stretch reads HMVLVARGRT…VGGTTYEISV (545 aa). 5 disordered regions span residues 293–346, 437–461, 633–659, 666–685, and 703–736; these read RSKS…PSTP, CTPL…SPGT, RSSA…GMNR, RSPV…SPSY, and HLGT…HTSV. Residues 326-338 are compositionally biased toward low complexity; sequence SQLTSSEESSLSS. 3 stretches are compositionally biased toward polar residues: residues 633 to 651, 669 to 681, and 724 to 733; these read RSSA…TSLH, VHQS…SVPR, and GTPSGTPSRH.

The protein belongs to the DHHC palmitoyltransferase family. ERF2/ZDHHC9 subfamily.

Its subcellular location is the golgi apparatus membrane. The protein resides in the mitochondrion membrane. The catalysed reaction is L-cysteinyl-[protein] + hexadecanoyl-CoA = S-hexadecanoyl-L-cysteinyl-[protein] + CoA. In terms of biological role, palmitoyltransferase that catalyzes the addition of palmitate onto various protein substrates and therefore function in several unrelated biological processes. The polypeptide is Palmitoyltransferase ZDHHC8B (Danio rerio (Zebrafish)).